Reading from the N-terminus, the 309-residue chain is Glutaminase (309 aa).

The substrate site is built by serine 65, asparagine 117, glutamate 162, asparagine 169, tyrosine 193, tyrosine 245, and valine 263.

This sequence belongs to the glutaminase family. Homotetramer.

The catalysed reaction is L-glutamine + H2O = L-glutamate + NH4(+). The protein is Glutaminase of Bacillus mycoides (strain KBAB4) (Bacillus weihenstephanensis).